The sequence spans 183 residues: Dual-action ribosomal maturation protein DarP (183 aa).

It belongs to the DarP family.

It is found in the cytoplasm. Member of a network of 50S ribosomal subunit biogenesis factors which assembles along the 30S-50S interface, preventing incorrect 23S rRNA structures from forming. Promotes peptidyl transferase center (PTC) maturation. The sequence is that of Dual-action ribosomal maturation protein DarP from Escherichia coli O7:K1 (strain IAI39 / ExPEC).